Here is a 65-residue protein sequence, read N- to C-terminus: Large ribosomal subunit protein bL35 (65 aa).

It belongs to the bacterial ribosomal protein bL35 family.

The chain is Large ribosomal subunit protein bL35 from Nostoc sp. (strain PCC 7120 / SAG 25.82 / UTEX 2576).